We begin with the raw amino-acid sequence, 281 residues long: Tryptophan synthase alpha chain (281 aa).

Active-site proton acceptor residues include Glu-49 and Asp-60.

It belongs to the TrpA family. As to quaternary structure, tetramer of two alpha and two beta chains.

It carries out the reaction (1S,2R)-1-C-(indol-3-yl)glycerol 3-phosphate + L-serine = D-glyceraldehyde 3-phosphate + L-tryptophan + H2O. Its pathway is amino-acid biosynthesis; L-tryptophan biosynthesis; L-tryptophan from chorismate: step 5/5. In terms of biological role, the alpha subunit is responsible for the aldol cleavage of indoleglycerol phosphate to indole and glyceraldehyde 3-phosphate. This Methanocaldococcus jannaschii (strain ATCC 43067 / DSM 2661 / JAL-1 / JCM 10045 / NBRC 100440) (Methanococcus jannaschii) protein is Tryptophan synthase alpha chain.